We begin with the raw amino-acid sequence, 605 residues long: Kelch-like protein 41b (605 aa).

The BTB domain maps to 32–102 (VDCTLKIGDR…YSAEIDLVDD (71 aa)). In terms of domain architecture, BACK spans 136-238 (CLAVFRLGLV…PEKYFREKVE (103 aa)). Kelch repeat units lie at residues 345 to 397 (QLFI…ESEN), 398 to 446 (LLFA…SHNN), 447 to 494 (LVYC…VHKG), 496 to 541 (IIVT…SSGG), and 543 to 598 (LFSI…MRLN).

Its subcellular location is the cytoplasm. It localises to the cytoskeleton. It is found in the sarcoplasmic reticulum membrane. The protein resides in the endoplasmic reticulum membrane. In terms of biological role, involved in skeletal muscle development and maintenance. The protein is Kelch-like protein 41b of Danio rerio (Zebrafish).